Here is a 492-residue protein sequence, read N- to C-terminus: N-succinylglutamate 5-semialdehyde dehydrogenase (492 aa).

220-225 (GSASTG) contacts NAD(+). Residues E243 and C277 contribute to the active site.

It belongs to the aldehyde dehydrogenase family. AstD subfamily.

It catalyses the reaction N-succinyl-L-glutamate 5-semialdehyde + NAD(+) + H2O = N-succinyl-L-glutamate + NADH + 2 H(+). Its pathway is amino-acid degradation; L-arginine degradation via AST pathway; L-glutamate and succinate from L-arginine: step 4/5. Its function is as follows. Catalyzes the NAD-dependent reduction of succinylglutamate semialdehyde into succinylglutamate. The chain is N-succinylglutamate 5-semialdehyde dehydrogenase from Salmonella typhimurium (strain LT2 / SGSC1412 / ATCC 700720).